Reading from the N-terminus, the 143-residue chain is Ribosome maturation factor RimP (143 aa).

It belongs to the RimP family.

It localises to the cytoplasm. In terms of biological role, required for maturation of 30S ribosomal subunits. This Borrelia hermsii (strain HS1 / DAH) protein is Ribosome maturation factor RimP.